The following is a 164-amino-acid chain: Protein SprT (164 aa).

Positions 14-156 (QQAETFFKRP…LCKRCRAILV (143 aa)) constitute a SprT-like domain. Zn(2+) is bound at residue His69. Glu70 is a catalytic residue. Residue His73 coordinates Zn(2+).

Belongs to the SprT family. Requires Zn(2+) as cofactor.

The protein localises to the cytoplasm. This Pseudomonas putida (strain GB-1) protein is Protein SprT.